A 76-amino-acid polypeptide reads, in one-letter code: MKLTCVVIVAVLFLTACQLITADDSRSTQRHRALRSTTKLSMSTRCKPPGSKCSPSMRDCCTTCISYTKRCRKYYN.

A signal peptide spans 1–22 (MKLTCVVIVAVLFLTACQLITA). Residues 23-45 (DDSRSTQRHRALRSTTKLSMSTR) constitute a propeptide that is removed on maturation. Intrachain disulfides connect Cys46-Cys61, Cys53-Cys64, and Cys60-Cys71. A hydroxyproline mark is found at Pro49 and Pro55.

The protein belongs to the conotoxin O1 superfamily. In terms of tissue distribution, expressed by the venom duct.

It is found in the secreted. Omega-conotoxins act at presynaptic membranes, they bind and block voltage-gated calcium channels (Cav). This toxin potently blocks mammalian N-type calcium channels (Cav2.2/CACNA1B) (IC(50)=330 nM on human channels). It is 9-fold more potent in displacing radiolabeled omega-conotoxin GVIA from fish brain membranes than from human SH-SY5Y cells. Functionally, omega-conotoxins act at presynaptic membranes, they bind and block voltage-gated calcium channels (Cav). This toxin potently blocks mammalian N-type calcium channels (Cav2.2/CACNA1B) (IC(50)=600 nM on human channels). It is 60-fold more potent in displacing radiolabeled omega-conotoxin GVIA from fish brain membranes than from human SH-SY5Y cells. In vivo, when tested on rat neuropathic pain model, this toxin shows an analgesic activity. In Conus moncuri (Sea snail), this protein is Omega-conotoxin MoVIA.